The sequence spans 69 residues: Metallothionein-like protein CRS5 (69 aa).

This sequence belongs to the metallothionein superfamily. Type 13 family.

In terms of biological role, critical role in copper (specific) homeostasis and detoxification. May protect by directly chelating and sequestering copper ions. The polypeptide is Metallothionein-like protein CRS5 (CRS5) (Saccharomyces cerevisiae (strain RM11-1a) (Baker's yeast)).